The sequence spans 178 residues: NADH-quinone oxidoreductase subunit B 1 (178 aa).

Residues Cys39, Cys40, Cys104, and Cys135 each coordinate [4Fe-4S] cluster.

This sequence belongs to the complex I 20 kDa subunit family. In terms of assembly, NDH-1 is composed of 14 different subunits. Subunits NuoB, C, D, E, F, and G constitute the peripheral sector of the complex. It depends on [4Fe-4S] cluster as a cofactor.

The protein resides in the cell inner membrane. The catalysed reaction is a quinone + NADH + 5 H(+)(in) = a quinol + NAD(+) + 4 H(+)(out). In terms of biological role, NDH-1 shuttles electrons from NADH, via FMN and iron-sulfur (Fe-S) centers, to quinones in the respiratory chain. The immediate electron acceptor for the enzyme in this species is believed to be a menaquinone. Couples the redox reaction to proton translocation (for every two electrons transferred, four hydrogen ions are translocated across the cytoplasmic membrane), and thus conserves the redox energy in a proton gradient. In Cytophaga hutchinsonii (strain ATCC 33406 / DSM 1761 / CIP 103989 / NBRC 15051 / NCIMB 9469 / D465), this protein is NADH-quinone oxidoreductase subunit B 1.